We begin with the raw amino-acid sequence, 454 residues long: OTU domain-containing protein 1 (454 aa).

2 disordered regions span residues 36–64 (QSAS…REAA) and 116–257 (LPPP…SRAD). Residues 52–64 (RPPAAATEPREAA) show a composition bias toward low complexity. The segment covering 116–125 (LPPPSAPSPP) has biased composition (pro residues). Basic and acidic residues-rich tracts occupy residues 151-164 (DAPD…EHRQ), 193-210 (GEER…RASG), and 219-229 (ALRRQDPEAEA). The region spanning 282–411 (KYRFHIIPDG…NGHYDAVFDH (130 aa)) is the OTU domain. Residues 287 to 293 (IIPDGNC) form a cys-loop region. Asp290 is a catalytic residue. Residue Cys293 is the Nucleophile of the active site. The segment at 342–352 (AAQDGAWAGYP) is his-loop. The segment at 399 to 404 (WLSNGH) is variable-loop. The active site involves His404. Residues 430 to 449 (KRDEELAKSMAISLSKMYIE) form the UIM domain.

The enzyme catalyses Thiol-dependent hydrolysis of ester, thioester, amide, peptide and isopeptide bonds formed by the C-terminal Gly of ubiquitin (a 76-residue protein attached to proteins as an intracellular targeting signal).. Deubiquitinating enzyme that specifically hydrolyzes 'Lys-63'-linked polyubiquitin to monoubiquitin. Required for the stability and translation of a subset mRNAs with a high abundance of rare codons by mediating deubiquitination of 40S ribosomal protein RPS10/eS10, thereby antagonizing ZNF598-mediated 40S ubiquitination. The abundance of rare codons in mRNAs can limit the translation rate and can lead to ribosome collisions that trigger activation of ribosome quality control (RQC) pathway by ZNF598. OTUD1-mediated deubiquitination prevents activation of the RQC and subsequent dissociation of ribosomes and stimulates formation of polysomes and translation. This is OTU domain-containing protein 1 (Otud1) from Mus musculus (Mouse).